The sequence spans 374 residues: Probable tRNA pseudouridine synthase D (374 aa).

Aspartate 81 acts as the Nucleophile in catalysis. A TRUD domain is found at 141 to 340; the sequence is VFPNYFDVQR…RKGFQKMYDL (200 aa).

Belongs to the pseudouridine synthase TruD family.

The catalysed reaction is uridine(13) in tRNA = pseudouridine(13) in tRNA. Functionally, could be responsible for synthesis of pseudouridine from uracil-13 in transfer RNAs. The chain is Probable tRNA pseudouridine synthase D from Nanoarchaeum equitans (strain Kin4-M).